We begin with the raw amino-acid sequence, 257 residues long: Large ribosomal subunit protein uL2 (257 aa).

The disordered stretch occupies residues 207 to 226 (VEHPFGGGNHQHIGKPSTIR).

The protein belongs to the universal ribosomal protein uL2 family. In terms of assembly, component of the large ribosomal subunit.

The protein resides in the cytoplasm. Its function is as follows. Component of the large ribosomal subunit. The ribosome is a large ribonucleoprotein complex responsible for the synthesis of proteins in the cell. This chain is Large ribosomal subunit protein uL2 (rpl8), found in Ictalurus punctatus (Channel catfish).